A 305-amino-acid chain; its full sequence is MNMQEVYEYLSTVLPEGHVKQDEMLKNHTHIKVGGKADVFVAPTNYDEIQEVIKYANKYNIPVTFLGNGSNVIIKDGGIRGITVSLIHITGVTVTGTTIVAQCGAAIIDVSRIALDHNLTGLEFACGIPGSVGGALYMNAGAYGGEISFVLTEAVVMTGDGELRTLTKEAFEFGYRKSVFANNHYIILEARFELEEGLYEEIKAKMDDLTFKRESKQPLEYPSCGSVFKRPPNNFAGKLIQESGLQGKRIGGVEVSLKHAGFMVNVDNGTAQDYIDLIHFVQKTVEEKFGVKLEREVRIIGEDKE.

The FAD-binding PCMH-type domain maps to 33 to 197; the sequence is VGGKADVFVA…LEARFELEEG (165 aa). The active site involves Arg-176. Ser-226 (proton donor) is an active-site residue. Glu-296 is an active-site residue.

This sequence belongs to the MurB family. The cofactor is FAD.

It is found in the cytoplasm. The catalysed reaction is UDP-N-acetyl-alpha-D-muramate + NADP(+) = UDP-N-acetyl-3-O-(1-carboxyvinyl)-alpha-D-glucosamine + NADPH + H(+). It participates in cell wall biogenesis; peptidoglycan biosynthesis. Functionally, cell wall formation. This is UDP-N-acetylenolpyruvoylglucosamine reductase 2 from Bacillus thuringiensis subsp. konkukian (strain 97-27).